The chain runs to 293 residues: MPSLKDLKNRIASVKATQKITKAMKMVAAAKLRRAQEAAEAARPYSQRMAAVLANIAQAVGADDSAPALMTGTGRDNTHLLVVCTAERGLCGGFNSQIARFARDHVRKLLAQGKTVKIICVGKKGFDILRREFASLIIDRVDLREVKKIGFENADRIGHKVIELFEKGEFDVCTLFYSEFKSVISQVPTAQQLIPASAGPVAAEADSASAVYEYEPDAAAILTDLIPRNISVQIFRALLENVAGEMGAKMSAMDNATRNAGEMINKLTLNYNRQRQAQITKELIEIISGAEAL.

It belongs to the ATPase gamma chain family. In terms of assembly, F-type ATPases have 2 components, CF(1) - the catalytic core - and CF(0) - the membrane proton channel. CF(1) has five subunits: alpha(3), beta(3), gamma(1), delta(1), epsilon(1). CF(0) has three main subunits: a, b and c.

It is found in the cell inner membrane. Its function is as follows. Produces ATP from ADP in the presence of a proton gradient across the membrane. The gamma chain is believed to be important in regulating ATPase activity and the flow of protons through the CF(0) complex. The chain is ATP synthase gamma chain from Sinorhizobium fredii (strain NBRC 101917 / NGR234).